Reading from the N-terminus, the 887-residue chain is Translation initiation factor IF-2 (887 aa).

The interval 1-259 is disordered; it reads MSDEQDQGET…KVGDDRRRGA (259 aa). A compositionally biased stretch (low complexity) spans 62-94; it reads GRPSAPSRASGGAAAPRGLTAAEQAARQRAVVE. Composition is skewed to basic and acidic residues over residues 95-111 and 119-158; these read QQRE…EQEK and EEAR…RRAA. Over residues 159–210 the composition is skewed to low complexity; that stretch reads EASQATAAPPAPAAAASPRAAMPAPTAAPARPGAAPARRTAPVPPATSASET. Residues 250–259 show a composition bias toward basic and acidic residues; sequence KVGDDRRRGA. The region spanning 386–556 is the tr-type G domain; that stretch reads VRPPVVTIMG…LLQAELLDLK (171 aa). A G1 region spans residues 395–402; it reads GHVDHGKT. 395–402 provides a ligand contact to GTP; it reads GHVDHGKT. Residues 420–424 are G2; sequence GITQH. The G3 stretch occupies residues 442-445; that stretch reads DTPG. Residues 442–446 and 496–499 contribute to the GTP site; these read DTPGH and NKID. Residues 496–499 form a G4 region; it reads NKID. The tract at residues 532-534 is G5; the sequence is SAL.

Belongs to the TRAFAC class translation factor GTPase superfamily. Classic translation factor GTPase family. IF-2 subfamily.

The protein localises to the cytoplasm. One of the essential components for the initiation of protein synthesis. Protects formylmethionyl-tRNA from spontaneous hydrolysis and promotes its binding to the 30S ribosomal subunits. Also involved in the hydrolysis of GTP during the formation of the 70S ribosomal complex. The chain is Translation initiation factor IF-2 from Acidiphilium cryptum (strain JF-5).